Reading from the N-terminus, the 341-residue chain is HTH-type transcriptional repressor PurR (341 aa).

The HTH lacI-type domain maps to alanine 2 to valine 56. Residues isoleucine 4–asparagine 23 constitute a DNA-binding region (H-T-H motif). Residues serine 48 to valine 56 mediate DNA binding. Residues tyrosine 73, arginine 190, threonine 192, phenylalanine 221, and aspartate 275 each coordinate hypoxanthine.

In terms of assembly, homodimer.

It functions in the pathway purine metabolism; purine nucleotide biosynthesis [regulation]. Functionally, is the main repressor of the genes involved in the de novo synthesis of purine nucleotides, regulating purB, purC, purEK, purF, purHD, purL, purMN and guaBA expression. PurR is allosterically activated to bind its cognate DNA by binding the purine corepressors, hypoxanthine or guanine, thereby effecting transcription repression. The protein is HTH-type transcriptional repressor PurR of Serratia proteamaculans (strain 568).